A 282-amino-acid chain; its full sequence is MNMAESHLDPSKLATGPAGFGAAAGQRPLAPLNAKIEVKNLNFFYNQFHALKNINLSIPEGKVTAFIGPSGCGKSTLLRTFNKMYALYPEQRAEGEIVMDGENLLQSKLDISLLRARIGMVFQKPTPFPMSIYDNIAFGVKMFERLTRSEMDDRVEWALTKAALWNEVKDKLSQSGYGLSGGQQQRLCIARGIAIRPEVLLLDEPCSALDPISTGRIEELIAELKSDYTVVIVTHNMQQAARCSDYTAYMYLGELIEFGETEKIFIKPARKETEDYITGRFG.

Residues 36 to 277 (IEVKNLNFFY…PARKETEDYI (242 aa)) enclose the ABC transporter domain. 68–75 (GPSGCGKS) is a binding site for ATP.

Belongs to the ABC transporter superfamily. Phosphate importer (TC 3.A.1.7) family. The complex is composed of two ATP-binding proteins (PstB), two transmembrane proteins (PstC and PstA) and a solute-binding protein (PstS).

The protein resides in the cell inner membrane. It carries out the reaction phosphate(out) + ATP + H2O = ADP + 2 phosphate(in) + H(+). Part of the ABC transporter complex PstSACB involved in phosphate import. Responsible for energy coupling to the transport system. This is Phosphate import ATP-binding protein PstB from Burkholderia pseudomallei (strain 1710b).